The sequence spans 450 residues: Tol-Pal system protein TolB (450 aa).

The first 37 residues, 1–37 (MIERNGLQRMPFRLNRRHMISGMASAAVLLGSRQALG), serve as a signal peptide directing secretion.

The protein belongs to the TolB family. The Tol-Pal system is composed of five core proteins: the inner membrane proteins TolA, TolQ and TolR, the periplasmic protein TolB and the outer membrane protein Pal. They form a network linking the inner and outer membranes and the peptidoglycan layer.

The protein localises to the periplasm. In terms of biological role, part of the Tol-Pal system, which plays a role in outer membrane invagination during cell division and is important for maintaining outer membrane integrity. The chain is Tol-Pal system protein TolB from Nitrobacter winogradskyi (strain ATCC 25391 / DSM 10237 / CIP 104748 / NCIMB 11846 / Nb-255).